The following is a 151-amino-acid chain: Large ribosomal subunit protein bL9 (151 aa).

This sequence belongs to the bacterial ribosomal protein bL9 family.

Functionally, binds to the 23S rRNA. This chain is Large ribosomal subunit protein bL9, found in Mycolicibacterium gilvum (strain PYR-GCK) (Mycobacterium gilvum (strain PYR-GCK)).